A 387-amino-acid polypeptide reads, in one-letter code: ATP-dependent Clp protease proteolytic subunit-related protein 1, chloroplastic (387 aa).

The N-terminal 41 residues, 1 to 41 (MATALVSPLTSQLNHEAVCSKFVLPKSPFMSGSKLFSSNMP), are a transit peptide targeting the chloroplast. The span at 355 to 365 (QDSSFEKRDYD) shows a compositional bias: basic and acidic residues. The disordered stretch occupies residues 355-387 (QDSSFEKRDYDGTLAQRAMRPGGGSPAAPAGLR).

Belongs to the peptidase S14 family. As to quaternary structure, component of the chloroplastic Clp protease core complex which consist of at least 16 proteins: CLPP4 (3 copies), CLPP5 (3 copies), CLPR4 (2 copies), ClpP1 (1 copy), CLPP6 (1 copy), CLPR2 (1 copy), CLPT1 (1 copy), CLPT2 (1 copy) and 3 copies of CLPP3 and/or CLPR1 and/or CLPR3. The core complex is organized in two heptameric rings, one containing CLPP3,4,5,6 in a 1:2:3:1 ratio and the other CLPP1 and CLPR1,2,3,4 in a 3:1:1:1:1 ratio.

The protein localises to the plastid. It localises to the chloroplast stroma. Required for chloroplast development and differentiation. The chain is ATP-dependent Clp protease proteolytic subunit-related protein 1, chloroplastic from Arabidopsis thaliana (Mouse-ear cress).